We begin with the raw amino-acid sequence, 130 residues long: Small ribosomal subunit protein uS11 (130 aa).

This sequence belongs to the universal ribosomal protein uS11 family. As to quaternary structure, part of the 30S ribosomal subunit. Interacts with proteins S7 and S18. Binds to IF-3.

Functionally, located on the platform of the 30S subunit, it bridges several disparate RNA helices of the 16S rRNA. Forms part of the Shine-Dalgarno cleft in the 70S ribosome. This Lactobacillus helveticus (strain DPC 4571) protein is Small ribosomal subunit protein uS11.